An 827-amino-acid polypeptide reads, in one-letter code: Periplasmic nitrate reductase (827 aa).

The tat-type signal signal peptide spans Met-1–Ala-32. The 4Fe-4S Mo/W bis-MGD-type domain occupies Ile-37–Asp-93. The [4Fe-4S] cluster site is built by Cys-44, Cys-47, Cys-51, and Cys-79. Residues Lys-81, Gln-148, Asn-173, Cys-177, Trp-210–Met-217, Ser-241–His-245, Met-371, Gln-375, Asn-481, Ser-507–Asp-508, Lys-530, Asp-557, and Thr-717–Thr-726 contribute to the Mo-bis(molybdopterin guanine dinucleotide) site. Position 793 (Phe-793) interacts with substrate. Mo-bis(molybdopterin guanine dinucleotide) contacts are provided by Asn-801 and Lys-818.

This sequence belongs to the prokaryotic molybdopterin-containing oxidoreductase family. NasA/NapA/NarB subfamily. In terms of assembly, component of the periplasmic nitrate reductase NapAB complex composed of NapA and NapB. It depends on [4Fe-4S] cluster as a cofactor. Mo-bis(molybdopterin guanine dinucleotide) is required as a cofactor. Predicted to be exported by the Tat system. The position of the signal peptide cleavage has not been experimentally proven.

The protein localises to the periplasm. The catalysed reaction is 2 Fe(II)-[cytochrome] + nitrate + 2 H(+) = 2 Fe(III)-[cytochrome] + nitrite + H2O. Its function is as follows. Catalytic subunit of the periplasmic nitrate reductase complex NapAB. Receives electrons from NapB and catalyzes the reduction of nitrate to nitrite. This is Periplasmic nitrate reductase from Actinobacillus pleuropneumoniae serotype 7 (strain AP76).